Reading from the N-terminus, the 579-residue chain is CTP synthase 1 (579 aa).

Residues 305–559 (KIALVGKYTN…LGLVAASAGI (255 aa)) enclose the Glutamine amidotransferase type-1 domain. The active-site For GATase activity is C404. K422 participates in a covalent cross-link: Glycyl lysine isopeptide (Lys-Gly) (interchain with G-Cter in ubiquitin). Active-site for GATase activity residues include H535 and E537.

It belongs to the CTP synthase family. In terms of assembly, homodimer. Oligomerizes to a tetramer in the presence of its substrates UTP and ATP.

It catalyses the reaction UTP + L-glutamine + ATP + H2O = CTP + L-glutamate + ADP + phosphate + 2 H(+). It participates in pyrimidine metabolism; CTP biosynthesis via de novo pathway; CTP from UDP: step 2/2. Its activity is regulated as follows. Activated by GTP and inhibited by CTP. Catalyzes the ATP-dependent amination of UTP to CTP with either L-glutamine or ammonia as the source of nitrogen. The sequence is that of CTP synthase 1 (URA7) from Saccharomyces cerevisiae (strain ATCC 204508 / S288c) (Baker's yeast).